We begin with the raw amino-acid sequence, 416 residues long: RNA polymerase sigma factor SigA (416 aa).

The segment at 184–254 (MVQSNLRLVV…TRAIADQSRT (71 aa)) is sigma-70 factor domain-2. Residues 208–211 (DLIQ) carry the Interaction with polymerase core subunit RpoC motif. Residues 263–338 (ETISRIKKTT…EADGETPEDE (76 aa)) form a sigma-70 factor domain-3 region. The interval 351–404 (VLDTLSPRERDVLRLRYGLDDGRMKTLEEIGQIFNVTRERIRQIEAKALRKLRH) is sigma-70 factor domain-4. Residues 377 to 396 (LEEIGQIFNVTRERIRQIEA) constitute a DNA-binding region (H-T-H motif).

The protein belongs to the sigma-70 factor family. RpoD/SigA subfamily. In terms of assembly, interacts transiently with the RNA polymerase catalytic core.

It localises to the cytoplasm. Sigma factors are initiation factors that promote the attachment of RNA polymerase to specific initiation sites and are then released. This sigma factor is the primary sigma factor during exponential growth. The protein is RNA polymerase sigma factor SigA of Microcystis aeruginosa.